Reading from the N-terminus, the 451-residue chain is 3-carboxy-cis,cis-muconate cycloisomerase (451 aa).

The protein belongs to the class-II fumarase/aspartase family. As to quaternary structure, homotetramer.

The catalysed reaction is 2-(carboxymethyl)-5-oxo-2,5-dihydro-2-furoate = 3-carboxy-cis,cis-muconate + H(+). It functions in the pathway aromatic compound metabolism; beta-ketoadipate pathway; 5-oxo-4,5-dihydro-2-furylacetate from 3-carboxy-cis,cis-muconate: step 1/2. Catalyzes an anti cycloisomerization. The polypeptide is 3-carboxy-cis,cis-muconate cycloisomerase (pcaB) (Acinetobacter baylyi (strain ATCC 33305 / BD413 / ADP1)).